Consider the following 502-residue polypeptide: Lysine--tRNA ligase (502 aa).

Residues E413 and E420 each coordinate Mg(2+).

This sequence belongs to the class-II aminoacyl-tRNA synthetase family. As to quaternary structure, homodimer. Mg(2+) serves as cofactor.

The protein resides in the cytoplasm. It catalyses the reaction tRNA(Lys) + L-lysine + ATP = L-lysyl-tRNA(Lys) + AMP + diphosphate. In Haemophilus influenzae (strain 86-028NP), this protein is Lysine--tRNA ligase.